Consider the following 283-residue polypeptide: ESX-1 secretion-associated protein EspG1 (283 aa).

Belongs to the EspG family. Interacts specifically with ESX-1-dependent PE/PPE proteins. Interacts with PPE68.

The protein localises to the cytoplasm. Functionally, specific chaperone for cognate PE/PPE proteins. Plays an important role in preventing aggregation of PE/PPE dimers. This is ESX-1 secretion-associated protein EspG1 from Mycobacterium tuberculosis (strain ATCC 25618 / H37Rv).